Reading from the N-terminus, the 263-residue chain is Receptor expression-enhancing protein 3-A (263 aa).

Transmembrane regions (helical) follow at residues 2–22 (VSWIICKAVVLVFGMLYPAYF) and 35–55 (YVRWMMYWIVFALYTVTEAIA). Disordered stretches follow at residues 161–228 (GDET…SMRS) and 240–263 (YASLKHKPKKRPQLYFREDTAHHL). Residues 199–214 (DDNTDEDVEVNSEDEV) show a composition bias toward acidic residues. Positions 242–251 (SLKHKPKKRP) are enriched in basic residues.

Belongs to the DP1 family.

The protein resides in the endoplasmic reticulum membrane. Its function is as follows. Microtubule-binding protein required to ensure proper cell division and nuclear envelope reassembly by sequestering the endoplasmic reticulum away from chromosomes during mitosis. Probably acts by clearing the endoplasmic reticulum membrane from metaphase chromosomes. The polypeptide is Receptor expression-enhancing protein 3-A (reep3-a) (Xenopus laevis (African clawed frog)).